A 171-amino-acid polypeptide reads, in one-letter code: Endoribonuclease YbeY (171 aa).

Zn(2+)-binding residues include His-115, His-119, and His-125.

Belongs to the endoribonuclease YbeY family. Requires Zn(2+) as cofactor.

Its subcellular location is the cytoplasm. Its function is as follows. Single strand-specific metallo-endoribonuclease involved in late-stage 70S ribosome quality control and in maturation of the 3' terminus of the 16S rRNA. This chain is Endoribonuclease YbeY, found in Tropheryma whipplei (strain TW08/27) (Whipple's bacillus).